A 158-amino-acid polypeptide reads, in one-letter code: Transcriptional regulator MraZ (158 aa).

SpoVT-AbrB domains are found at residues 7–57 (THQN…PTAA) and 86–129 (AYPV…EPAA). Residues 133-158 (RRAEARTRSRQLALPAQGRRQGGADA) form a disordered region.

The protein belongs to the MraZ family. Forms oligomers.

It is found in the cytoplasm. The protein resides in the nucleoid. The sequence is that of Transcriptional regulator MraZ from Gluconacetobacter diazotrophicus (strain ATCC 49037 / DSM 5601 / CCUG 37298 / CIP 103539 / LMG 7603 / PAl5).